An 880-amino-acid polypeptide reads, in one-letter code: Valine--tRNA ligase (880 aa).

The 'HIGH' region motif lies at 46-56 (PNVTGKLHLGH). A 'KMSKS' region motif is present at residues 520 to 524 (KMSKS). Residue Lys523 coordinates ATP. A coiled-coil region spans residues 808 to 880 (LAGLINIEEE…KARIAELKEN (73 aa)).

This sequence belongs to the class-I aminoacyl-tRNA synthetase family. ValS type 1 subfamily. As to quaternary structure, monomer.

It localises to the cytoplasm. The catalysed reaction is tRNA(Val) + L-valine + ATP = L-valyl-tRNA(Val) + AMP + diphosphate. Catalyzes the attachment of valine to tRNA(Val). As ValRS can inadvertently accommodate and process structurally similar amino acids such as threonine, to avoid such errors, it has a 'posttransfer' editing activity that hydrolyzes mischarged Thr-tRNA(Val) in a tRNA-dependent manner. The polypeptide is Valine--tRNA ligase (Lactococcus lactis subsp. lactis (strain IL1403) (Streptococcus lactis)).